The sequence spans 68 residues: Conotoxin ArMMSK-01 (68 aa).

An N-terminal signal peptide occupies residues 1-20 (MMSKLGVLLTICMLLFPLTA). A propeptide spanning residues 21-51 (LPLDGDQPADRPAERMQDDFISEQHPLFNPI) is cleaved from the precursor. 3 cysteine pairs are disulfide-bonded: C54–C67, C55–C63, and C59–C66. P65 bears the 4-hydroxyproline mark.

It belongs to the conotoxin M superfamily. Expressed by the venom duct.

The protein localises to the secreted. This is Conotoxin ArMMSK-01 from Conus arenatus (Sand-dusted cone).